Here is a 118-residue protein sequence, read N- to C-terminus: Large ribosomal subunit protein bL20 (118 aa).

The protein belongs to the bacterial ribosomal protein bL20 family.

Binds directly to 23S ribosomal RNA and is necessary for the in vitro assembly process of the 50S ribosomal subunit. It is not involved in the protein synthesizing functions of that subunit. This is Large ribosomal subunit protein bL20 from Aeromonas hydrophila subsp. hydrophila (strain ATCC 7966 / DSM 30187 / BCRC 13018 / CCUG 14551 / JCM 1027 / KCTC 2358 / NCIMB 9240 / NCTC 8049).